The primary structure comprises 445 residues: MVKKRLSSSDNVFKFEIPSNSKTSAEAPHSSTDSPSSVFLSSEAENGAEDRRRVSKSPTAQSPTSSVEAESPDQKRSLGLWSKSSFDGSSLLSDKNDCKTESKTDSKTERKKSSSSSQYKANMHFHKLFLDVPTEEPLRQSFTCALQKEILYQGKLFVSENWICFHSKVFGKDTKISIPAFSVTLIKKTKTALLVPNALIIATVTDRYIFVSLLSRDSTYKLIKSVCGHLENTSVGNSPNPSSAENSFRADRPSSLPLDFNDEFSDLDGVVRQRRQDLEGYSSSGSQTPESENSRDFHVTESQTVLNVTKGETKPPRTDAHGSRAPDGKAKILPAHGQSETIGILHKMESRKCPTLHHILIVYAIIVCALIISTFYMRYRINTLEERLGTLTSIMDPHSTEQTAPSGLGSQMQLNVEVLCQELTANIVKLEKIQNNLQKLLENGD.

The residue at position 1 (Met1) is an N-acetylmethionine. The interval 1 to 118 (MVKKRLSSSD…ERKKSSSSSQ (118 aa)) is disordered. 2 stretches are compositionally biased toward polar residues: residues 18-44 (PSNS…SSEA) and 56-68 (KSPT…SSVE). Positions 82 to 93 (SKSSFDGSSLLS) are enriched in low complexity. Residues 94–112 (DKNDCKTESKTDSKTERKK) show a composition bias toward basic and acidic residues. Positions 123-190 (MHFHKLFLDV…FSVTLIKKTK (68 aa)) constitute a GRAM domain. The span at 233–246 (TSVGNSPNPSSAEN) shows a compositional bias: polar residues. Residues 233-252 (TSVGNSPNPSSAENSFRADR) are disordered. Phosphoserine occurs at positions 238, 255, and 265. The interval 277–331 (DLEGYSSSGSQTPESENSRDFHVTESQTVLNVTKGETKPPRTDAHGSRAPDGKAK) is disordered. Over residues 281-291 (YSSSGSQTPES) the composition is skewed to polar residues. The span at 311–330 (GETKPPRTDAHGSRAPDGKA) shows a compositional bias: basic and acidic residues.

This Mus musculus (Mouse) protein is GRAM domain-containing protein 2B (Gramd2b).